Here is a 150-residue protein sequence, read N- to C-terminus: Snaclec rhinocetin subunit beta (150 aa).

The N-terminal stretch at 1-23 (MGRFIFLSSGLLVVFLSLSGTGA) is a signal peptide. Disulfide bonds link cysteine 27–cysteine 38, cysteine 55–cysteine 144, and cysteine 121–cysteine 136. The 112-residue stretch at 34 to 145 (YEGYCYKVFK…CNRQQYFVCK (112 aa)) folds into the C-type lectin domain.

It belongs to the snaclec family. In terms of assembly, heterodimer; disulfide-linked. In terms of tissue distribution, expressed by the venom gland.

The protein localises to the secreted. In terms of biological role, antagonist of the alpha-2 subunit of the integrin alpha-2/beta-1 (ITGA2/ITGB1) on human platelets and endothelial cells. This protein inhibits collagen-stimulated activation of human platelets in a dose-dependent manner. In addition, it antagonizes the binding of monoclonal antibodies against the alpha-2 subunit of integrin alpha-2/beta-1 to platelets and it coimmunoprecipitates with this integrin. This is Snaclec rhinocetin subunit beta from Bitis rhinoceros (West African gaboon viper).